The primary structure comprises 590 residues: Aspartate--tRNA ligase (590 aa).

Residue Glu172 coordinates L-aspartate. An aspartate region spans residues 196–199 (QLFK). Residue Arg218 coordinates L-aspartate. Residues 218-220 (RDE) and Gln227 each bind ATP. Residue His449 participates in L-aspartate binding. Glu483 is a binding site for ATP. Residue Arg490 coordinates L-aspartate. 535 to 538 (GLDR) lines the ATP pocket.

The protein belongs to the class-II aminoacyl-tRNA synthetase family. Type 1 subfamily. Homodimer.

Its subcellular location is the cytoplasm. The enzyme catalyses tRNA(Asp) + L-aspartate + ATP = L-aspartyl-tRNA(Asp) + AMP + diphosphate. In terms of biological role, catalyzes the attachment of L-aspartate to tRNA(Asp) in a two-step reaction: L-aspartate is first activated by ATP to form Asp-AMP and then transferred to the acceptor end of tRNA(Asp). The polypeptide is Aspartate--tRNA ligase (Glaesserella parasuis serovar 5 (strain SH0165) (Haemophilus parasuis)).